We begin with the raw amino-acid sequence, 482 residues long: tRNA sulfurtransferase (482 aa).

Positions 61 to 165 constitute a THUMP domain; the sequence is LAIRDALTRI…DDRLLLIKGR (105 aa). ATP is bound by residues 183 to 184, Lys265, Gly287, and Gln296; that span reads LI. Cysteines 344 and 456 form a disulfide. In terms of domain architecture, Rhodanese spans 404-482; it reads FGANDVILDI…GFANVKVYRP (79 aa). Cys456 serves as the catalytic Cysteine persulfide intermediate.

It belongs to the ThiI family.

The protein localises to the cytoplasm. It catalyses the reaction [ThiI sulfur-carrier protein]-S-sulfanyl-L-cysteine + a uridine in tRNA + 2 reduced [2Fe-2S]-[ferredoxin] + ATP + H(+) = [ThiI sulfur-carrier protein]-L-cysteine + a 4-thiouridine in tRNA + 2 oxidized [2Fe-2S]-[ferredoxin] + AMP + diphosphate. The enzyme catalyses [ThiS sulfur-carrier protein]-C-terminal Gly-Gly-AMP + S-sulfanyl-L-cysteinyl-[cysteine desulfurase] + AH2 = [ThiS sulfur-carrier protein]-C-terminal-Gly-aminoethanethioate + L-cysteinyl-[cysteine desulfurase] + A + AMP + 2 H(+). Its pathway is cofactor biosynthesis; thiamine diphosphate biosynthesis. Catalyzes the ATP-dependent transfer of a sulfur to tRNA to produce 4-thiouridine in position 8 of tRNAs, which functions as a near-UV photosensor. Also catalyzes the transfer of sulfur to the sulfur carrier protein ThiS, forming ThiS-thiocarboxylate. This is a step in the synthesis of thiazole, in the thiamine biosynthesis pathway. The sulfur is donated as persulfide by IscS. This is tRNA sulfurtransferase from Salmonella arizonae (strain ATCC BAA-731 / CDC346-86 / RSK2980).